Reading from the N-terminus, the 59-residue chain is Small integral membrane protein 30 (59 aa).

The N-terminal stretch at M1–A24 is a signal peptide. Residues V25 to D29 lie on the Extracellular side of the membrane. The helical transmembrane segment at A30–V50 threads the bilayer. Residues Y51–M59 are Cytoplasmic-facing.

In terms of assembly, interacts (via transmembrane domain) with antiviral protein MAVS (via transmembrane domain); the interaction disrupts MAVS interaction with RIGI and inhibits MAVS aggregation, resulting in the repression of type I interferon signaling and innate immune responses.

It localises to the endoplasmic reticulum membrane. The protein localises to the mitochondrion membrane. Negatively regulates antiviral innate immune responses. Disrupts the interaction of antiviral protein MAVS with innate immune receptor RIGI and inhibits MAVS aggregation, resulting in the repression of type I interferon signaling and innate immune responses. In Homo sapiens (Human), this protein is Small integral membrane protein 30.